Consider the following 401-residue polypeptide: uncharacterized protein (401 aa).

Residues C7, C13, C16, and C94 each coordinate [4Fe-4S] cluster. The S-adenosyl-L-methionine site is built by Q230, Y259, E280, and D328. C355 (nucleophile) is an active-site residue.

Belongs to the class I-like SAM-binding methyltransferase superfamily. RNA M5U methyltransferase family.

This is an uncharacterized protein from Chlamydia pneumoniae (Chlamydophila pneumoniae).